A 1412-amino-acid polypeptide reads, in one-letter code: Erbin (1412 aa).

17 LRR repeats span residues 23 to 44 (TVTT…IFTF), 47 to 68 (TLEE…LFNC), 70 to 91 (SLHK…IANL), 93 to 114 (NLRE…IKNC), 116 to 137 (VLTI…FSQL), 139 to 161 (NLTQ…GRLT), 162 to 183 (KLQI…MNRL), 185 to 206 (QLER…LEQL), 208 to 229 (GLKE…IGSL), 231 to 252 (QLTY…ISTC), 254 to 275 (NLQD…IGSL), 277 to 298 (NITT…IGGL), 300 to 321 (SVEE…IGQL), 323 to 344 (NLRT…IGSW), 346 to 367 (NITV…MGDM), 369 to 391 (KLKV…TKLQ), and 392 to 413 (QLTA…QKET). Residues Ser440 and Ser444 each carry the phosphoserine modification. Disordered stretches follow at residues 464 to 489 (CDED…PYPD) and 506 to 542 (KDEE…TTTV). Residues 470 to 480 (EREAPPREGNL) are compositionally biased toward basic and acidic residues. At Tyr483 the chain carries Phosphotyrosine. Position 485 is a phosphothreonine (Thr485). Positions 506 to 532 (KDEETNEDSGRDLKPHEDQQDINKDVG) are enriched in basic and acidic residues. The span at 533 to 542 (VKTSESTTTV) shows a compositional bias: low complexity. Phosphoserine is present on residues Ser569, Ser598, Ser602, Ser603, and Ser620. The interval 615-681 (PLIETSINQP…TDSSQDTSLC (67 aa)) is disordered. Basic and acidic residues predominate over residues 632–641 (NKKDDTKETD). The span at 650 to 662 (NSNQNNSNCSSPS) shows a compositional bias: low complexity. A compositionally biased stretch (polar residues) spans 663-681 (RMSDSVSLNTDSSQDTSLC). The residue at position 715 (Ser715) is a Phosphoserine. Residues 803 to 867 (ETEHLENGNK…PQKSGPVGSV (65 aa)) form a disordered region. A compositionally biased stretch (polar residues) spans 817 to 835 (ESVNKVNGHSEETSQSPNR). Phosphoserine is present on residues Ser852, Ser857, and Ser872. The residue at position 917 (Thr917) is a Phosphothreonine. Tyr920 bears the Phosphotyrosine mark. Position 931 is a phosphoserine (Ser931). Residue Tyr972 is modified to Phosphotyrosine. 2 disordered regions span residues 997–1021 (NPQI…NQSY) and 1075–1192 (QRQS…KSKV). The span at 1075-1086 (QRQSSVSSTASV) shows a compositional bias: polar residues. Tyr1104 bears the Phosphotyrosine mark. A compositionally biased stretch (polar residues) spans 1157–1171 (MSVSDFNYSRTSPSK). Ser1158, Ser1179, and Ser1286 each carry phosphoserine. The 90-residue stretch at 1321-1410 (EIRVRVEKDP…TVELIIVREV (90 aa)) folds into the PDZ domain.

It belongs to the LAP (LRR and PDZ) protein family. In terms of assembly, interacts with ERBB2, BPAG1 and ITGB4. May favor the localization of ERBB2, by restricting its presence to the basolateral membrane of epithelial cells. Also found to interact with ARVCF and delta catenin. Interacts (via C-terminus) with DST Isoform 3 (via N-terminus). Interacts with NOD2 (via CARD domain). As to expression, highly expressed in brain, heart, kidney, muscle and stomach, followed by liver, spleen and intestine.

It localises to the cell junction. The protein resides in the hemidesmosome. It is found in the nucleus membrane. Its subcellular location is the basolateral cell membrane. In terms of biological role, acts as an adapter for the receptor ERBB2, in epithelia. By binding the unphosphorylated 'Tyr-1248' of receptor ERBB2, it may contribute to stabilize this unphosphorylated state. Inhibits NOD2-dependent NF-kappa-B signaling and pro-inflammatory cytokine secretion. The chain is Erbin from Homo sapiens (Human).